A 759-amino-acid chain; its full sequence is Tripartite motif-containing protein 46 (759 aa).

The tract at residues 1-166 (MAEGEDMQTF…VERYRQSVSV (166 aa)) is required for proximal axon localization, axon formation and migration. The RING-type 1; degenerate zinc-finger motif lies at 33-59 (CPVCQEMYKQPLVLPCTHNVCQACARE). The tract at residues 67–98 (IGHGGDPSSEPTSPASTPSTRSPRLSRRTLPK) is disordered. Residues 73 to 89 (PSSEPTSPASTPSTRSP) show a composition bias toward low complexity. Residues 172 to 231 (CQLCKPPPLEATKGCSECRATFCNECFKLFHPWGTQKAQHEPTLPTLSFRPKGLMCPDHK) form an RING-type 2; degenerate zinc finger. The segment at 222–263 (PKGLMCPDHKEEVTHYCKTCQRLVCQLCRVRRTHSGHKITPV) adopts a B box-type zinc-finger fold. Zn(2+)-binding residues include C227, H230, C249, and H255. Positions 294-400 (ELEETIRHTE…RATEALQTFR (107 aa)) form a coiled coil. Residue S330 is modified to Phosphoserine. One can recognise a COS domain in the interval 370–427 (LKETDQPCFVQAAKQLHNRIARATEALQTFRPAASSSFRHCQLDVGREMKLLTELNFL). The required for microtubule association, proximal axon localization and axon formation stretch occupies residues 411-429 (QLDVGREMKLLTELNFLRV). Residues 429–528 (VPEAPVIDTQ…EDVHLHTPPA (100 aa)) enclose the Fibronectin type-III domain. A B30.2/SPRY domain is found at 513–747 (GYGEYSEDVH…LQEPVGTKPE (235 aa)). A Phosphoserine modification is found at S627.

The protein belongs to the TRIM/RBCC family. As to quaternary structure, interacts with TUBB3 and TUBA4A. In terms of tissue distribution, expressed in primary hippocampal and cortical neurons.

The protein localises to the cell projection. It localises to the axon. Its subcellular location is the cytoplasm. It is found in the cytoskeleton. In terms of biological role, microtubule-associated protein that is involved in the formation of parallel microtubule bundles linked by cross-bridges in the proximal axon. Required for the uniform orientation and maintenance of the parallel microtubule fascicles, which are important for efficient cargo delivery and trafficking in axons. Thereby also required for proper axon specification, the establishment of neuronal polarity and proper neuronal migration. This is Tripartite motif-containing protein 46 from Rattus norvegicus (Rat).